A 457-amino-acid chain; its full sequence is uncharacterized protein (457 aa).

2 consecutive transmembrane segments (helical) span residues 1–21 and 250–270; these read MVSS…MTLL and ILIV…ATTF.

Its subcellular location is the membrane. This is an uncharacterized protein from Saccharomyces cerevisiae (strain ATCC 204508 / S288c) (Baker's yeast).